The sequence spans 75 residues: Protein BsdD (75 aa).

Involved in the non-oxidative decarboxylation and detoxification of phenolic derivatives under both aerobic and anaerobic conditions, however the precise biochemical function of BsdD in metabolism of phenolic acid is unknown. The chain is Protein BsdD from Bacillus subtilis (strain 168).